The sequence spans 445 residues: Phosphoglucosamine mutase (445 aa).

The active-site Phosphoserine intermediate is Ser102. Residues Ser102, Asp241, Asp243, and Asp245 each contribute to the Mg(2+) site. Ser102 is modified (phosphoserine).

Belongs to the phosphohexose mutase family. Mg(2+) is required as a cofactor. Post-translationally, activated by phosphorylation.

The catalysed reaction is alpha-D-glucosamine 1-phosphate = D-glucosamine 6-phosphate. Its function is as follows. Catalyzes the conversion of glucosamine-6-phosphate to glucosamine-1-phosphate. This is Phosphoglucosamine mutase from Zymomonas mobilis subsp. mobilis (strain ATCC 31821 / ZM4 / CP4).